The chain runs to 348 residues: S-adenosylmethionine:tRNA ribosyltransferase-isomerase (348 aa).

The protein belongs to the QueA family. In terms of assembly, monomer.

The protein resides in the cytoplasm. It catalyses the reaction 7-aminomethyl-7-carbaguanosine(34) in tRNA + S-adenosyl-L-methionine = epoxyqueuosine(34) in tRNA + adenine + L-methionine + 2 H(+). It functions in the pathway tRNA modification; tRNA-queuosine biosynthesis. Functionally, transfers and isomerizes the ribose moiety from AdoMet to the 7-aminomethyl group of 7-deazaguanine (preQ1-tRNA) to give epoxyqueuosine (oQ-tRNA). In Tolumonas auensis (strain DSM 9187 / NBRC 110442 / TA 4), this protein is S-adenosylmethionine:tRNA ribosyltransferase-isomerase.